Reading from the N-terminus, the 277-residue chain is uncharacterized protein (277 aa).

A disordered region spans residues 1–20 (MVTTSPPPTLTNSVQPHPTT).

This is an uncharacterized protein from Acidianus convivator (ATV).